Here is a 1493-residue protein sequence, read N- to C-terminus: Sister chromatid cohesion protein 2 (1493 aa).

At Ser43 the chain carries Phosphoserine; in mutant scc2-8A. Residue Thr67 is modified to Phosphothreonine. Ser74 carries the post-translational modification Phosphoserine; in mutant scc2-8A. Ser127 and Ser157 each carry phosphoserine. The interval 151 to 170 is disordered; the sequence is SNAGNLSFNDNSSNKKTKTS. Ser162 is modified (phosphoserine; in mutant scc2-8A). Ser163 is modified (phosphoserine). Thr231 and Thr236 each carry phosphothreonine. A phosphoserine mark is found at Ser305 and Ser320. Position 360 is a phosphothreonine; in mutant scc2-8A (Thr360). HEAT repeat units follow at residues 695–732, 734–771, 806–843, and 1132–1169; these read NLYD…KDKV, LSNP…YFEF, TKVY…KVHE, and FNSR…LEER. The residue at position 753 (Ser753) is a Phosphoserine. At Ser1179 the chain carries Phosphoserine; in mutant scc2-8A. At Ser1182 the chain carries Phosphoserine. Phosphoserine; in mutant scc2-8A is present on Ser1183. Position 1185 is a phosphoserine (Ser1185). The stretch at 1244-1281 is one HEAT 5 repeat; sequence TNPSHSIPTVIALFASTSQYIRHVAYELLEDLFEKYET.

The protein belongs to the SCC2/Nipped-B family. In terms of assembly, interacts with SCC4. Interacts with the cohesin complex, which is composed of: the SMC1 and SMC3 heterodimer attached via their hinge domain, MCD1/SCC1 which link them, and IRR1/SCC3, which interacts with MCD1. Phosphorylated at alternative sites Ser-43, Ser-74, Ser-162, Thr-360, Ser-1179 and Ser-1183 when the principal phosphorylation sites Thr-67, Ser-127, Ser-157, Ser-163, Thr-231, Thr-236, Ser-305 and Ser-320 are mutated to alanines.

The protein localises to the nucleus. It is found in the chromosome. The protein resides in the centromere. Plays a structural role in chromatin and is involved in sister chromatid cohesion. Forms a complex with SCC4 required for the stable association of the cohesin complex with chromatin, which may act by hydrolyzing ATP from SMC1 and SMC3 heads. Binds to the nucleosome-free promoter regions of ribosomal protein genes and tRNA genes. Involved in transcriptional regulation by cooperating with the RSC complex to maintain nucleosome exhaustion at its binding sites. The chain is Sister chromatid cohesion protein 2 (SCC2) from Saccharomyces cerevisiae (strain ATCC 204508 / S288c) (Baker's yeast).